Consider the following 198-residue polypeptide: MFKVIQRSVGPASLSLLTFKVYAAPKKDSPPKNSVKVDELSLYSVPEGQSKYVEEARSQLEESISQLRHYCEPYTTWCQETYSQTKPKMQSLVQWGLDSYDYLQNAPPGFFPRLGVIGFAGLIGLLLARGSKIKKLVYPPGFMGLAASLYYPQQAIVFAQVSGERLYDWGLRGYIVIEDLWKENFQKPGNVKNSPGTK.

The N-terminal stretch at Met1–Pro25 is a signal peptide. Residues Pro108–Ala128 form a helical membrane-spanning segment. The O-linked (Xyl...) (chondroitin sulfate) serine glycan is linked to Ser162.

This sequence belongs to the apolipoprotein O/MICOS complex subunit Mic27 family. As to quaternary structure, component of the mitochondrial contact site and cristae organizing system (MICOS) complex, composed of at least MICOS10/MIC10, CHCHD3/MIC19, CHCHD6/MIC25, APOOL/MIC27, IMMT/MIC60, APOO/MIC23/MIC26 and MICOS13/MIC13. This complex was also known under the names MINOS or MitOS complex. he MICOS complex associates with mitochondrial outer membrane proteins SAMM50, MTX1 and MTX2 (together described as components of the mitochondrial outer membrane sorting assembly machinery (SAM) complex) and DNAJC11, mitochondrial inner membrane protein TMEM11 and with HSPA9. The MICOS and SAM complexes together with DNAJC11 are part of a large protein complex spanning both membranes termed the mitochondrial intermembrane space bridging (MIB) complex. Interacts with IMMT/MIC60. Interacts with MICOS10/MIC10 and APOOL/MIC27. In terms of processing, O-glycosylation; glycosaminoglycan of chondroitin-sulfate type. In terms of tissue distribution, expressed in all tissues examined. Up-regulated in diabetic heart.

It is found in the mitochondrion inner membrane. Its subcellular location is the secreted. The protein resides in the mitochondrion. The protein localises to the golgi apparatus membrane. It localises to the endoplasmic reticulum membrane. Component of the MICOS complex, a large protein complex of the mitochondrial inner membrane that plays crucial roles in the maintenance of crista junctions, inner membrane architecture, and formation of contact sites to the outer membrane. Plays a crucial role in crista junction formation and mitochondrial function. Can promote cardiac lipotoxicity by enhancing mitochondrial respiration and fatty acid metabolism in cardiac myoblasts. Promotes cholesterol efflux from macrophage cells. Detected in HDL, LDL and VLDL. Secreted by a microsomal triglyceride transfer protein (MTTP)-dependent mechanism, probably as a VLDL-associated protein that is subsequently transferred to HDL. In Homo sapiens (Human), this protein is MICOS complex subunit MIC26 (APOO).